The primary structure comprises 398 residues: Pentalenolactone synthase (398 aa).

Cys-347 contributes to the heme binding site.

The protein belongs to the cytochrome P450 family. Heme serves as cofactor.

It carries out the reaction pentalenolactone F + 2 reduced [2Fe-2S]-[ferredoxin] + O2 + 2 H(+) = pentalenolactone + 2 oxidized [2Fe-2S]-[ferredoxin] + 2 H2O. It functions in the pathway antibiotic biosynthesis; pentalenolactone biosynthesis. In terms of biological role, catalyzes the final step in the biosynthesis of the sesquiterpenoid antibiotic pentalenolactone by mediating the oxidative rearrangement of pentalenolactone F to pentalenolactone. The chain is Pentalenolactone synthase (penM) from Streptomyces exfoliatus (Streptomyces hydrogenans).